Reading from the N-terminus, the 37-residue chain is MKIGASVRKICEKCRLIRRRGRIIVICSNPRHKQRQG.

The protein belongs to the bacterial ribosomal protein bL36 family.

The protein resides in the plastid. Its subcellular location is the chloroplast. This is Large ribosomal subunit protein bL36c from Lotus japonicus (Lotus corniculatus var. japonicus).